Here is a 361-residue protein sequence, read N- to C-terminus: tRNA/tmRNA (uracil-C(5))-methyltransferase (361 aa).

S-adenosyl-L-methionine-binding residues include Gln-185, Tyr-213, Asn-218, Glu-234, and Asp-294. Cys-319 (nucleophile) is an active-site residue. Glu-353 serves as the catalytic Proton acceptor.

This sequence belongs to the class I-like SAM-binding methyltransferase superfamily. RNA M5U methyltransferase family. TrmA subfamily.

It catalyses the reaction uridine(54) in tRNA + S-adenosyl-L-methionine = 5-methyluridine(54) in tRNA + S-adenosyl-L-homocysteine + H(+). The catalysed reaction is uridine(341) in tmRNA + S-adenosyl-L-methionine = 5-methyluridine(341) in tmRNA + S-adenosyl-L-homocysteine + H(+). Functionally, dual-specificity methyltransferase that catalyzes the formation of 5-methyluridine at position 54 (m5U54) in all tRNAs, and that of position 341 (m5U341) in tmRNA (transfer-mRNA). The polypeptide is tRNA/tmRNA (uracil-C(5))-methyltransferase (Pseudomonas savastanoi pv. phaseolicola (strain 1448A / Race 6) (Pseudomonas syringae pv. phaseolicola (strain 1448A / Race 6))).